The sequence spans 301 residues: Glycine--tRNA ligase alpha subunit (301 aa).

Belongs to the class-II aminoacyl-tRNA synthetase family. In terms of assembly, tetramer of two alpha and two beta subunits.

Its subcellular location is the cytoplasm. The catalysed reaction is tRNA(Gly) + glycine + ATP = glycyl-tRNA(Gly) + AMP + diphosphate. The sequence is that of Glycine--tRNA ligase alpha subunit from Bordetella avium (strain 197N).